Reading from the N-terminus, the 372-residue chain is Spermidine/putrescine import ATP-binding protein PotA (372 aa).

The 231-residue stretch at 11 to 241 (IELRSIKKSY…PANLFVARFI (231 aa)) folds into the ABC transporter domain. 43-50 (GPSGCGKT) is an ATP binding site.

It belongs to the ABC transporter superfamily. Spermidine/putrescine importer (TC 3.A.1.11.1) family. The complex is composed of two ATP-binding proteins (PotA), two transmembrane proteins (PotB and PotC) and a solute-binding protein (PotD).

The protein localises to the cell inner membrane. The catalysed reaction is ATP + H2O + polyamine-[polyamine-binding protein]Side 1 = ADP + phosphate + polyamineSide 2 + [polyamine-binding protein]Side 1.. Its function is as follows. Part of the ABC transporter complex PotABCD involved in spermidine/putrescine import. Responsible for energy coupling to the transport system. The sequence is that of Spermidine/putrescine import ATP-binding protein PotA from Haemophilus influenzae (strain 86-028NP).